The primary structure comprises 192 residues: Orotate phosphoribosyltransferase (192 aa).

A 5-phospho-alpha-D-ribose 1-diphosphate-binding site is contributed by 116 to 124 (EDIVTTGLS). Residues T120 and R148 each coordinate orotate.

This sequence belongs to the purine/pyrimidine phosphoribosyltransferase family. PyrE subfamily. In terms of assembly, homodimer. Mg(2+) serves as cofactor.

The catalysed reaction is orotidine 5'-phosphate + diphosphate = orotate + 5-phospho-alpha-D-ribose 1-diphosphate. It functions in the pathway pyrimidine metabolism; UMP biosynthesis via de novo pathway; UMP from orotate: step 1/2. Functionally, catalyzes the transfer of a ribosyl phosphate group from 5-phosphoribose 1-diphosphate to orotate, leading to the formation of orotidine monophosphate (OMP). This Brucella abortus (strain S19) protein is Orotate phosphoribosyltransferase.